Reading from the N-terminus, the 153-residue chain is Prostaglandin E synthase (153 aa).

Topologically, residues 1–13 (MPPPSLAMVSGQA) are lumenal. The helical transmembrane segment at 14-42 (LPAFLLCSTLLVIKMYAVAVITGQVRLRK) threads the bilayer. Glutathione is bound at residue arginine 39. Residues 43–61 (KAFANPEDALRHGGLQFHR) lie on the Cytoplasmic side of the membrane. Residues 62 to 91 (DDQDVERCLRAHRNDMETIYPFLFLGLVYS) form a helical membrane-spanning segment. 74-78 (RNDME) contributes to the glutathione binding site. The Lumenal segment spans residues 92–96 (FLGPD). The chain crosses the membrane as a helical span at residues 97 to 120 (PFVAQMHFLVFFLGRMVHTVAYLG). Glutathione-binding residues include histidine 114 and tyrosine 118. The Cytoplasmic segment spans residues 121–124 (KLRA). A helical membrane pass occupies residues 125–153 (PTRSLAYTVAQLPCASMALQIVWEAARHL). Residue 127-131 (RSLAY) participates in glutathione binding.

This sequence belongs to the MAPEG family. As to quaternary structure, homotrimer. Glutathione is required as a cofactor.

It localises to the membrane. Its subcellular location is the cytoplasm. The protein localises to the perinuclear region. It carries out the reaction prostaglandin H2 = prostaglandin E2. The catalysed reaction is 2-glyceryl-prostaglandin H2 = 2-glyceryl-prostaglandin E2. It catalyses the reaction prostaglandin G2 = (15S)-15-hydroperoxy-prostaglandin E2. The enzyme catalyses 1-chloro-2,4-dinitrobenzene + glutathione = 2,4-dinitrophenyl-S-glutathione + chloride + H(+). It carries out the reaction (5S)-hydroperoxy-(6E,8Z,11Z,14Z)-eicosatetraenoate + 2 glutathione = (5S)-hydroxy-(6E,8Z,11Z,14Z)-eicosatetraenoate + glutathione disulfide + H2O. Its pathway is lipid metabolism; prostaglandin biosynthesis. Terminal enzyme of the cyclooxygenase (COX)-2-mediated prostaglandin E2 (PGE2) biosynthetic pathway. Catalyzes the glutathione-dependent oxidoreduction of prostaglandin endoperoxide H2 (PGH2) to prostaglandin E2 (PGE2) in response to inflammatory stimuli. Plays a key role in inflammation response, fever and pain. Also catalyzes the oxidoreduction of endocannabinoids into prostaglandin glycerol esters and PGG2 into 15-hydroperoxy-PGE2. In addition, displays low glutathione transferase and glutathione-dependent peroxidase activities, toward 1-chloro-2,4-dinitrobenzene and 5-hydroperoxyicosatetraenoic acid (5-HPETE), respectively. This is Prostaglandin E synthase (PTGES) from Equus caballus (Horse).